The sequence spans 342 residues: MTTLTITRPDDWHLHLRDGDVLTDTVRDSGRYNGRALIMPNLVPPVTTTEQALSYRERIQAENKSDSFAPLMSLYLTEKTTSEEIRKAKATGHIVAAKLYPAGATTNSDSGVSDVKNVYPILKTMQEEGMLLLIHGEVTTHDIDIFDREKTFLDTVLAPIVNDFPELKIVLEHITTKDAADFVKNAGPNVAATITAHHLLFNRNHMLVGGIKPHFYCLPILKRNTHQQALVEAATSGNPKFFLGTDSAPHAKDKKEAACGCAGSYTAHASIELYAEVFENEGKLENLEAFASFNGPDFYNLPRNTDTITLVKEAWIAPETMAFGNDFVVPIRAGEAVEWLVK.

Zn(2+)-binding residues include histidine 13 and histidine 15. Residues 15–17 and asparagine 41 contribute to the substrate site; that span reads HLR. Zn(2+) contacts are provided by lysine 98, histidine 135, and histidine 173. Lysine 98 carries the post-translational modification N6-carboxylysine. Histidine 135 lines the substrate pocket. Substrate is bound at residue leucine 218. Aspartate 246 contributes to the Zn(2+) binding site. Residue aspartate 246 is part of the active site. Substrate-binding residues include histidine 250 and alanine 262.

This sequence belongs to the metallo-dependent hydrolases superfamily. DHOase family. Class II DHOase subfamily. As to quaternary structure, homodimer. Zn(2+) serves as cofactor.

The enzyme catalyses (S)-dihydroorotate + H2O = N-carbamoyl-L-aspartate + H(+). The protein operates within pyrimidine metabolism; UMP biosynthesis via de novo pathway; (S)-dihydroorotate from bicarbonate: step 3/3. In terms of biological role, catalyzes the reversible cyclization of carbamoyl aspartate to dihydroorotate. The polypeptide is Dihydroorotase (Aliivibrio fischeri (strain ATCC 700601 / ES114) (Vibrio fischeri)).